A 234-amino-acid chain; its full sequence is GTP cyclohydrolase 1 (234 aa).

The tract at residues 1-26 (MDALIKPLRAGKPDAKPADPKGTEFR) is disordered. A compositionally biased stretch (basic and acidic residues) spans 11-26 (GKPDAKPADPKGTEFR). Zn(2+) is bound by residues Cys-123, His-126, and Cys-194.

This sequence belongs to the GTP cyclohydrolase I family. In terms of assembly, toroid-shaped homodecamer, composed of two pentamers of five dimers.

The enzyme catalyses GTP + H2O = 7,8-dihydroneopterin 3'-triphosphate + formate + H(+). Its pathway is cofactor biosynthesis; 7,8-dihydroneopterin triphosphate biosynthesis; 7,8-dihydroneopterin triphosphate from GTP: step 1/1. The chain is GTP cyclohydrolase 1 from Rhodopseudomonas palustris (strain BisB18).